Reading from the N-terminus, the 496-residue chain is ATP-dependent protease ATPase subunit HslU2 (496 aa).

Residues 1–10 constitute a mitochondrion transit peptide; it reads MIRFSWVRLC. ATP contacts are provided by residues Val51 and 94–99; that span reads GVGKTE. Positions 177 to 191 are enriched in low complexity; that stretch reads GSFGSSTRNSGSGDS. The tract at residues 177 to 204 is disordered; that stretch reads GSFGSSTRNSGSGDSSAEEDKNSSSRDN. Residues Asp308, Glu374, and Arg446 each contribute to the ATP site.

The protein belongs to the ClpX chaperone family. HslU subfamily. In terms of assembly, a double ring-shaped homohexamer of HslV is capped on each side by a ring-shaped HslU homohexamer. The assembly of the HslU/HslV complex (HslVU) is dependent on binding of ATP.

It is found in the mitochondrion matrix. It localises to the kinetoplast. Its function is as follows. ATPase subunit of a proteasome-like degradation complex; this subunit has chaperone activity. The binding of ATP and its subsequent hydrolysis by HslU are essential for unfolding of protein substrates subsequently hydrolyzed by HslV. HslU recognizes the N-terminal part of its protein substrates and unfolds these before they are guided to HslV for hydrolysis. The HslVU protease complex functions in mitochondrial DNA replication by regulating DNA helicase PIF2 protein levels. In Trypanosoma brucei brucei (strain 927/4 GUTat10.1), this protein is ATP-dependent protease ATPase subunit HslU2 (HslU2).